A 75-amino-acid chain; its full sequence is Calhepatin (75 aa).

Ser1 is subject to N-acetylserine. 2 EF-hand domains span residues 2–37 (ADEQ…VHPK) and 38–73 (VSRN…LADL). Asp15, Asp17, Ser19, Thr21, Glu26, Asp51, Asn53, Asp55, Gln57, and Glu62 together coordinate Ca(2+).

Monomer and homodimer. Liver, and to a much lower level intestine.

Its function is as follows. Binds both calcium and copper, but not zinc. May be involved in calcium signal transduction. The sequence is that of Calhepatin from Lepidosiren paradoxus (South American lungfish).